A 136-amino-acid polypeptide reads, in one-letter code: 5-hydroxyisourate hydrolase (136 aa).

A signal peptide spans 1–20 (MKRYILATVIASLVAAPAMA). The substrate site is built by H31, R69, and Y133.

This sequence belongs to the transthyretin family. 5-hydroxyisourate hydrolase subfamily. Homotetramer.

It is found in the periplasm. It catalyses the reaction 5-hydroxyisourate + H2O = 5-hydroxy-2-oxo-4-ureido-2,5-dihydro-1H-imidazole-5-carboxylate + H(+). Its function is as follows. Catalyzes the hydrolysis of 5-hydroxyisourate (HIU) to 2-oxo-4-hydroxy-4-carboxy-5-ureidoimidazoline (OHCU). This Salmonella typhimurium (strain LT2 / SGSC1412 / ATCC 700720) protein is 5-hydroxyisourate hydrolase (hiuH).